A 343-amino-acid polypeptide reads, in one-letter code: Methylthioribose-1-phosphate isomerase (343 aa).

Substrate contacts are provided by residues 48-50 (RGA), R88, and Q193. D234 (proton donor) is an active-site residue. Substrate is bound at residue 244 to 245 (NK).

Belongs to the eIF-2B alpha/beta/delta subunits family. MtnA subfamily.

The catalysed reaction is 5-(methylsulfanyl)-alpha-D-ribose 1-phosphate = 5-(methylsulfanyl)-D-ribulose 1-phosphate. The protein operates within amino-acid biosynthesis; L-methionine biosynthesis via salvage pathway; L-methionine from S-methyl-5-thio-alpha-D-ribose 1-phosphate: step 1/6. Functionally, catalyzes the interconversion of methylthioribose-1-phosphate (MTR-1-P) into methylthioribulose-1-phosphate (MTRu-1-P). In Thermotoga neapolitana (strain ATCC 49049 / DSM 4359 / NBRC 107923 / NS-E), this protein is Methylthioribose-1-phosphate isomerase.